A 1115-amino-acid chain; its full sequence is Carbamoyl phosphate synthase large chain (1115 aa).

Residues 1–407 form a carboxyphosphate synthetic domain region; the sequence is MPRRTDLHHV…ALGKVMRSLE (407 aa). ATP-binding residues include R134, R174, G180, G181, E213, I215, E220, G246, V247, H248, Q290, and E304. The ATP-grasp 1 domain maps to 138–333; sequence KDIVAKAGGE…IAKIAAKLAI (196 aa). Mg(2+) is bound by residues Q290, E304, and N306. Mn(2+)-binding residues include Q290, E304, and N306. The tract at residues 408-559 is oligomerization domain; the sequence is TTRAGFWTAP…ELDPAAETEV (152 aa). The carbamoyl phosphate synthetic domain stretch occupies residues 560–965; the sequence is APQTERPKVL…AFAKSQTAAY (406 aa). Residues 693–884 enclose the ATP-grasp 2 domain; it reads GDLLSAAGLP…LAKACARIML (192 aa). Residues R729, R768, L770, E775, G800, I801, H802, S803, Q843, and E855 each contribute to the ATP site. Residues Q843, E855, and N857 each coordinate Mg(2+). Mn(2+)-binding residues include Q843, E855, and N857. An MGS-like domain is found at 966–1113; it reads GSLPAQGTVF…QELHRVIGGV (148 aa). An allosteric domain region spans residues 966–1115; it reads GSLPAQGTVF…LHRVIGGVER (150 aa).

It belongs to the CarB family. As to quaternary structure, composed of two chains; the small (or glutamine) chain promotes the hydrolysis of glutamine to ammonia, which is used by the large (or ammonia) chain to synthesize carbamoyl phosphate. Tetramer of heterodimers (alpha,beta)4. It depends on Mg(2+) as a cofactor. Requires Mn(2+) as cofactor.

It carries out the reaction hydrogencarbonate + L-glutamine + 2 ATP + H2O = carbamoyl phosphate + L-glutamate + 2 ADP + phosphate + 2 H(+). The catalysed reaction is hydrogencarbonate + NH4(+) + 2 ATP = carbamoyl phosphate + 2 ADP + phosphate + 2 H(+). It participates in amino-acid biosynthesis; L-arginine biosynthesis; carbamoyl phosphate from bicarbonate: step 1/1. Its pathway is pyrimidine metabolism; UMP biosynthesis via de novo pathway; (S)-dihydroorotate from bicarbonate: step 1/3. Large subunit of the glutamine-dependent carbamoyl phosphate synthetase (CPSase). CPSase catalyzes the formation of carbamoyl phosphate from the ammonia moiety of glutamine, carbonate, and phosphate donated by ATP, constituting the first step of 2 biosynthetic pathways, one leading to arginine and/or urea and the other to pyrimidine nucleotides. The large subunit (synthetase) binds the substrates ammonia (free or transferred from glutamine from the small subunit), hydrogencarbonate and ATP and carries out an ATP-coupled ligase reaction, activating hydrogencarbonate by forming carboxy phosphate which reacts with ammonia to form carbamoyl phosphate. The protein is Carbamoyl phosphate synthase large chain of Mycobacterium tuberculosis (strain CDC 1551 / Oshkosh).